Consider the following 247-residue polypeptide: Phycocyanobilin:ferredoxin oxidoreductase (247 aa).

It belongs to the HY2 family.

It carries out the reaction (2R,3Z)-phycocyanobilin + 4 oxidized [2Fe-2S]-[ferredoxin] = biliverdin IXalpha + 4 reduced [2Fe-2S]-[ferredoxin] + 4 H(+). Catalyzes the four-electron reduction of biliverdin IX-alpha (2-electron reduction at both the A and D rings); the reaction proceeds via an isolatable 2-electron intermediate, 181,182-dihydrobiliverdin. This chain is Phycocyanobilin:ferredoxin oxidoreductase (pcyA), found in Prochlorococcus marinus (strain SARG / CCMP1375 / SS120).